Consider the following 433-residue polypeptide: Serine hydroxymethyltransferase (433 aa).

121–123 (AHV) contacts (6S)-5,6,7,8-tetrahydrofolate. An N6-(pyridoxal phosphate)lysine modification is found at K227. E243 contacts (6S)-5,6,7,8-tetrahydrofolate.

It belongs to the SHMT family. Homodimer. It depends on pyridoxal 5'-phosphate as a cofactor.

The protein localises to the cytoplasm. The protein operates within amino-acid biosynthesis; glycine biosynthesis; glycine from L-serine: step 1/1. Functionally, catalyzes the reversible interconversion of serine and glycine with a modified folate serving as the one-carbon carrier. Also exhibits a pteridine-independent aldolase activity toward beta-hydroxyamino acids, producing glycine and aldehydes, via a retro-aldol mechanism. The protein is Serine hydroxymethyltransferase of Saccharolobus islandicus (strain L.S.2.15 / Lassen #1) (Sulfolobus islandicus).